A 448-amino-acid polypeptide reads, in one-letter code: MHFVAISINHRTADVTLREQVAFRDDALRLAHEDLYETKAILENVILSTCNRTEVYAIVDQVHTGRYYIQRFLARSFGFEVDDIKDMSQVKVGDDAVEHLLRVTSGLDSIVLGETQILGQMRDAFFLAQNTGTTGTIFNHLFKQAITFAKKAHSETDIADNAVSVSYAAVELAKKVFGKLKSKHAVVIGAGEMGELSLLNLLGSGISNVTIVNRTLSKAKILAEKHNVSYDSLSALPSLLETTDIVISSTSAEDYIITNSMVKTISETRKLDSLVLIDIAVPRDIEPGIDAITNIFNYDVDDLKDLVDANLRERQLAAETIAGQIPEEIDSHNEWVNMLGVVPVIRALREKAMNIQAETMESIDRKLPDLSERERKVISKHTKSIINQMLKDPIKQAKELSTDKKSNEKLELFQNIFDIEAEDPREKAKLEKESRAKEILAHRIFSFE.

Residues 49–52, S109, 114–116, and Q120 each bind substrate; these read TCNR and ETQ. C50 serves as the catalytic Nucleophile. Residue 189–194 coordinates NADP(+); that stretch reads GAGEMG.

It belongs to the glutamyl-tRNA reductase family. Homodimer.

The enzyme catalyses (S)-4-amino-5-oxopentanoate + tRNA(Glu) + NADP(+) = L-glutamyl-tRNA(Glu) + NADPH + H(+). Its pathway is porphyrin-containing compound metabolism; protoporphyrin-IX biosynthesis; 5-aminolevulinate from L-glutamyl-tRNA(Glu): step 1/2. Its function is as follows. Catalyzes the NADPH-dependent reduction of glutamyl-tRNA(Glu) to glutamate 1-semialdehyde (GSA). This Staphylococcus epidermidis (strain ATCC 12228 / FDA PCI 1200) protein is Glutamyl-tRNA reductase.